Here is a 397-residue protein sequence, read N- to C-terminus: Succinate--CoA ligase [ADP-forming] subunit beta (397 aa).

Residues 9 to 253 (KEILASYGVR…IREENPIEVE (245 aa)) enclose the ATP-grasp domain. Residues Lys-50, 57–59 (GRG), Val-106, and Glu-116 each bind ATP. Mg(2+) is bound by residues Asn-208 and Asp-222. Residues Asn-273 and 330-332 (GIV) each bind substrate.

Belongs to the succinate/malate CoA ligase beta subunit family. As to quaternary structure, heterotetramer of two alpha and two beta subunits. Mg(2+) is required as a cofactor.

The enzyme catalyses succinate + ATP + CoA = succinyl-CoA + ADP + phosphate. The catalysed reaction is GTP + succinate + CoA = succinyl-CoA + GDP + phosphate. It participates in carbohydrate metabolism; tricarboxylic acid cycle; succinate from succinyl-CoA (ligase route): step 1/1. Functionally, succinyl-CoA synthetase functions in the citric acid cycle (TCA), coupling the hydrolysis of succinyl-CoA to the synthesis of either ATP or GTP and thus represents the only step of substrate-level phosphorylation in the TCA. The beta subunit provides nucleotide specificity of the enzyme and binds the substrate succinate, while the binding sites for coenzyme A and phosphate are found in the alpha subunit. This chain is Succinate--CoA ligase [ADP-forming] subunit beta, found in Flavobacterium johnsoniae (strain ATCC 17061 / DSM 2064 / JCM 8514 / BCRC 14874 / CCUG 350202 / NBRC 14942 / NCIMB 11054 / UW101) (Cytophaga johnsonae).